Consider the following 510-residue polypeptide: tRNA(Ile)-lysidine synthase (510 aa).

Residue 32–37 participates in ATP binding; sequence SGGLDS.

It belongs to the tRNA(Ile)-lysidine synthase family.

The protein localises to the cytoplasm. The enzyme catalyses cytidine(34) in tRNA(Ile2) + L-lysine + ATP = lysidine(34) in tRNA(Ile2) + AMP + diphosphate + H(+). Ligates lysine onto the cytidine present at position 34 of the AUA codon-specific tRNA(Ile) that contains the anticodon CAU, in an ATP-dependent manner. Cytidine is converted to lysidine, thus changing the amino acid specificity of the tRNA from methionine to isoleucine. The sequence is that of tRNA(Ile)-lysidine synthase from Blochmanniella pennsylvanica (strain BPEN).